The following is a 209-amino-acid chain: Thymidylate kinase (209 aa).

10-17 provides a ligand contact to ATP; it reads GLEGAGKS.

This sequence belongs to the thymidylate kinase family.

It carries out the reaction dTMP + ATP = dTDP + ADP. Functionally, phosphorylation of dTMP to form dTDP in both de novo and salvage pathways of dTTP synthesis. The protein is Thymidylate kinase of Photobacterium profundum (strain SS9).